Reading from the N-terminus, the 769-residue chain is Discoidin, CUB and LCCL domain-containing protein 2 (769 aa).

Residues 1 to 29 show a composition bias toward low complexity; sequence MASRAPLRAARSPQDPGGRAAPAATGRAP. A disordered region spans residues 1 to 39; the sequence is MASRAPLRAARSPQDPGGRAAPAATGRAPLPSAGWCPLP. Residues 1–63 form the signal peptide; that stretch reads MASRAPLRAA…LLLLLPDAGA (63 aa). At 64–523 the chain is on the extracellular side; sequence QKGDGCGHTV…VTPSVTKDVA (460 aa). Disulfide bonds link Cys69–Cys96 and Cys123–Cys145. In terms of domain architecture, CUB spans 69 to 184; it reads CGHTVLGPES…RGFLASYSVI (116 aa). Asn92 carries N-linked (GlcNAc...) asparagine glycosylation. The N-linked (GlcNAc...) asparagine glycan is linked to Asn152. An LCCL domain is found at 184–282; the sequence is IDKQDLITCL…MVGYLSTSLF (99 aa). A disulfide bond links Cys212 and Cys234. N-linked (GlcNAc...) asparagine glycosylation occurs at Asn269. Cys289 and Cys446 form a disulfide bridge. The F5/8 type C domain maps to 289–446; the sequence is CYGTLGMESG…IAMKVELLGC (158 aa). A disordered region spans residues 455–476; the sequence is PKLTQPPPPRNSNNLKNTTVHP. Polar residues predominate over residues 465–474; sequence NSNNLKNTTV. Asn471 and Asn511 each carry an N-linked (GlcNAc...) asparagine glycan. Residues 524-544 form a helical membrane-spanning segment; the sequence is LAAVLVPVLVMALTTLILILV. Topologically, residues 545–769 are cytoplasmic; the sequence is CAWHWRNRKK…EKFDAFKETL (225 aa). Ser601 bears the Phosphoserine mark. The interval 719 to 769 is disordered; the sequence is SCSSGQAQYDTPKGGKPAAAPEELVYQVPQSTQEASGAGRDEKFDAFKETL. Residues 757–769 show a composition bias toward basic and acidic residues; the sequence is GRDEKFDAFKETL.

The protein localises to the membrane. The protein is Discoidin, CUB and LCCL domain-containing protein 2 (Dcbld2) of Rattus norvegicus (Rat).